The primary structure comprises 349 residues: MDLTRQGWLHGQPTASGVLKSTPEDFVVIEDLGYSPDGDGEQLLVRVRKQGCNTRFVAEALAKFAGIPARDVSFAGMKDRHAVTEQWFCLRLPGKVTPDLNAFQLEGVEVLESARHRRKLRIGALQGNAFTLVLRQVSDRDAVEQRLQLITAVGVPNYFGSQRFGHDGNNLKLAQRWAADEIRVRERSKRSFILSAARSAMFNQVVSDRLAQQGSLCRVLAGDALQLTGRGSWFVAETAEMDSLQQRVDNNELRITAPLPGSGEWGTRDDALSFEQQSLAHEGALIALMERERVDAARRAMLVIPRELRWRWADDATLEMSFWLPAGSFATSVVRELIVTQSSSNEADE.

Residue Phe26 participates in substrate binding. The active-site Nucleophile is the Asp79. Asn128 contributes to the substrate binding site. The 150-residue stretch at 154-303 folds into the TRUD domain; the sequence is GVPNYFGSQR…VDAARRAMLV (150 aa). Phe329 contacts substrate.

Belongs to the pseudouridine synthase TruD family.

The catalysed reaction is uridine(13) in tRNA = pseudouridine(13) in tRNA. Functionally, responsible for synthesis of pseudouridine from uracil-13 in transfer RNAs. This chain is tRNA pseudouridine synthase D, found in Erwinia tasmaniensis (strain DSM 17950 / CFBP 7177 / CIP 109463 / NCPPB 4357 / Et1/99).